We begin with the raw amino-acid sequence, 119 residues long: Beta-2-microglobulin (119 aa).

The N-terminal stretch at methionine 1–threonine 20 is a signal peptide. Positions proline 25 to lysine 114 constitute an Ig-like C1-type domain. Cysteine 45 and cysteine 100 are joined by a disulfide.

Belongs to the beta-2-microglobulin family. In terms of assembly, heterodimer of an alpha chain and a beta chain. Beta-2-microglobulin is the beta-chain of major histocompatibility complex class I molecules.

Its subcellular location is the secreted. In terms of biological role, component of the class I major histocompatibility complex (MHC). Involved in the presentation of peptide antigens to the immune system. This chain is Beta-2-microglobulin (B2M), found in Callicebus personatus personatus (Masked titi).